The following is a 688-amino-acid chain: Elongation factor G (688 aa).

A tr-type G domain is found at 8-282 (KNFRNFGIMA…AVVDFLPSPV (275 aa)). GTP-binding positions include 17-24 (AHIDAGKT), 81-85 (DTPGH), and 135-138 (NKMD).

The protein belongs to the TRAFAC class translation factor GTPase superfamily. Classic translation factor GTPase family. EF-G/EF-2 subfamily.

It localises to the cytoplasm. In terms of biological role, catalyzes the GTP-dependent ribosomal translocation step during translation elongation. During this step, the ribosome changes from the pre-translocational (PRE) to the post-translocational (POST) state as the newly formed A-site-bound peptidyl-tRNA and P-site-bound deacylated tRNA move to the P and E sites, respectively. Catalyzes the coordinated movement of the two tRNA molecules, the mRNA and conformational changes in the ribosome. This chain is Elongation factor G (fusA), found in Mycoplasma genitalium (strain ATCC 33530 / DSM 19775 / NCTC 10195 / G37) (Mycoplasmoides genitalium).